The primary structure comprises 328 residues: D-cysteine desulfhydrase (328 aa).

Lysine 51 carries the post-translational modification N6-(pyridoxal phosphate)lysine.

This sequence belongs to the ACC deaminase/D-cysteine desulfhydrase family. In terms of assembly, homodimer. Pyridoxal 5'-phosphate is required as a cofactor.

The catalysed reaction is D-cysteine + H2O = hydrogen sulfide + pyruvate + NH4(+) + H(+). Functionally, catalyzes the alpha,beta-elimination reaction of D-cysteine and of several D-cysteine derivatives. It could be a defense mechanism against D-cysteine. This chain is D-cysteine desulfhydrase, found in Escherichia coli (strain SMS-3-5 / SECEC).